The sequence spans 181 residues: Acireductone dioxygenase (181 aa).

Residues His-97, His-99, Glu-103, and His-141 each coordinate Fe(2+). Ni(2+)-binding residues include His-97, His-99, Glu-103, and His-141.

It belongs to the acireductone dioxygenase (ARD) family. As to quaternary structure, monomer. It depends on Fe(2+) as a cofactor. Ni(2+) serves as cofactor.

It catalyses the reaction 1,2-dihydroxy-5-(methylsulfanyl)pent-1-en-3-one + O2 = 3-(methylsulfanyl)propanoate + CO + formate + 2 H(+). The enzyme catalyses 1,2-dihydroxy-5-(methylsulfanyl)pent-1-en-3-one + O2 = 4-methylsulfanyl-2-oxobutanoate + formate + 2 H(+). It participates in amino-acid biosynthesis; L-methionine biosynthesis via salvage pathway; L-methionine from S-methyl-5-thio-alpha-D-ribose 1-phosphate: step 5/6. Catalyzes 2 different reactions between oxygen and the acireductone 1,2-dihydroxy-3-keto-5-methylthiopentene (DHK-MTPene) depending upon the metal bound in the active site. Fe-containing acireductone dioxygenase (Fe-ARD) produces formate and 2-keto-4-methylthiobutyrate (KMTB), the alpha-ketoacid precursor of methionine in the methionine recycle pathway. Ni-containing acireductone dioxygenase (Ni-ARD) produces methylthiopropionate, carbon monoxide and formate, and does not lie on the methionine recycle pathway. The protein is Acireductone dioxygenase of Stutzerimonas stutzeri (strain A1501) (Pseudomonas stutzeri).